Reading from the N-terminus, the 550-residue chain is Methionine--tRNA ligase (550 aa).

The 'HIGH' region signature appears at 13 to 23 (PYANGPLHFGH). Positions 145, 148, 158, and 161 each coordinate Zn(2+). The short motif at 331–335 (QFSKS) is the 'KMSKS' region element. Lysine 334 provides a ligand contact to ATP.

This sequence belongs to the class-I aminoacyl-tRNA synthetase family. MetG type 1 subfamily. As to quaternary structure, monomer. Zn(2+) serves as cofactor.

It localises to the cytoplasm. It catalyses the reaction tRNA(Met) + L-methionine + ATP = L-methionyl-tRNA(Met) + AMP + diphosphate. Its function is as follows. Is required not only for elongation of protein synthesis but also for the initiation of all mRNA translation through initiator tRNA(fMet) aminoacylation. This Chlamydia muridarum (strain MoPn / Nigg) protein is Methionine--tRNA ligase (metG).